A 377-amino-acid polypeptide reads, in one-letter code: Glutamate 5-kinase (377 aa).

Position 21 (K21) interacts with ATP. 3 residues coordinate substrate: S61, D149, and N161. Residues 181-182 and 223-229 each bind ATP; these read SD and SGGMTSK. The region spanning 286–363 is the PUA domain; the sequence is RGSVQVDAGA…REHEELLGYA (78 aa).

The protein belongs to the glutamate 5-kinase family.

It is found in the cytoplasm. The enzyme catalyses L-glutamate + ATP = L-glutamyl 5-phosphate + ADP. The protein operates within amino-acid biosynthesis; L-proline biosynthesis; L-glutamate 5-semialdehyde from L-glutamate: step 1/2. Functionally, catalyzes the transfer of a phosphate group to glutamate to form L-glutamate 5-phosphate. The polypeptide is Glutamate 5-kinase (Novosphingobium aromaticivorans (strain ATCC 700278 / DSM 12444 / CCUG 56034 / CIP 105152 / NBRC 16084 / F199)).